The chain runs to 178 residues: Transcriptional repressor NrdR (178 aa).

The tract at residues methionine 1 to aspartate 21 is disordered. The segment at cysteine 3–cysteine 34 is a zinc-finger region. Over residues glycine 7–aspartate 21 the composition is skewed to basic and acidic residues. One can recognise an ATP-cone domain in the interval leucine 49–aspartate 139.

It belongs to the NrdR family. It depends on Zn(2+) as a cofactor.

Negatively regulates transcription of bacterial ribonucleotide reductase nrd genes and operons by binding to NrdR-boxes. The protein is Transcriptional repressor NrdR of Gluconacetobacter diazotrophicus (strain ATCC 49037 / DSM 5601 / CCUG 37298 / CIP 103539 / LMG 7603 / PAl5).